We begin with the raw amino-acid sequence, 86 residues long: MAHKKGSGSTRNGRDSNAQRLGVKKYGGEYVIAGNILIRQRGTNVKAGFNVGIGKDNTLYSLINGEVKFERFDKKRKKISVYPCLD.

Residues 1 to 20 (MAHKKGSGSTRNGRDSNAQR) are disordered. A compositionally biased stretch (polar residues) spans 7–19 (SGSTRNGRDSNAQ).

Belongs to the bacterial ribosomal protein bL27 family.

It localises to the plastid. The protein localises to the chloroplast. The sequence is that of Large ribosomal subunit protein bL27c (rpl27) from Guillardia theta (Cryptophyte).